We begin with the raw amino-acid sequence, 595 residues long: Chaperone protein HscA homolog (595 aa).

The protein belongs to the heat shock protein 70 family.

Its function is as follows. Chaperone involved in the maturation of iron-sulfur cluster-containing proteins. Has a low intrinsic ATPase activity which is markedly stimulated by HscB. This is Chaperone protein HscA homolog from Rickettsia africae (strain ESF-5).